The chain runs to 150 residues: Cytochrome c oxidase subunit 5A, mitochondrial (150 aa).

A mitochondrion-targeting transit peptide spans 1-41 (MLGAALRRCAVAATSRAGPRGLLHSAPNPGPAAAIQSVRCY). The SIFI-degron motif lies at 2 to 17 (LGAALRRCAVAATSRA). N6-acetyllysine is present on residues lysine 87 and lysine 113. Threonine 141 bears the Phosphothreonine mark.

This sequence belongs to the cytochrome c oxidase subunit 5A family. As to quaternary structure, component of the cytochrome c oxidase (complex IV, CIV), a multisubunit enzyme composed of 14 subunits. The complex is composed of a catalytic core of 3 subunits MT-CO1, MT-CO2 and MT-CO3, encoded in the mitochondrial DNA, and 11 supernumerary subunits COX4I, COX5A, COX5B, COX6A, COX6B, COX6C, COX7A, COX7B, COX7C, COX8 and NDUFA4, which are encoded in the nuclear genome. The complex exists as a monomer or a dimer and forms supercomplexes (SCs) in the inner mitochondrial membrane with NADH-ubiquinone oxidoreductase (complex I, CI) and ubiquinol-cytochrome c oxidoreductase (cytochrome b-c1 complex, complex III, CIII), resulting in different assemblies (supercomplex SCI(1)III(2)IV(1) and megacomplex MCI(2)III(2)IV(2)). Interacts with AFG1L. Interacts with RAB5IF. In response to mitochondrial stress, the precursor protein is ubiquitinated by the SIFI complex in the cytoplasm before mitochondrial import, leading to its degradation. Within the SIFI complex, UBR4 initiates ubiquitin chain that are further elongated or branched by KCMF1.

It is found in the mitochondrion inner membrane. It functions in the pathway energy metabolism; oxidative phosphorylation. Functionally, component of the cytochrome c oxidase, the last enzyme in the mitochondrial electron transport chain which drives oxidative phosphorylation. The respiratory chain contains 3 multisubunit complexes succinate dehydrogenase (complex II, CII), ubiquinol-cytochrome c oxidoreductase (cytochrome b-c1 complex, complex III, CIII) and cytochrome c oxidase (complex IV, CIV), that cooperate to transfer electrons derived from NADH and succinate to molecular oxygen, creating an electrochemical gradient over the inner membrane that drives transmembrane transport and the ATP synthase. Cytochrome c oxidase is the component of the respiratory chain that catalyzes the reduction of oxygen to water. Electrons originating from reduced cytochrome c in the intermembrane space (IMS) are transferred via the dinuclear copper A center (CU(A)) of subunit 2 and heme A of subunit 1 to the active site in subunit 1, a binuclear center (BNC) formed by heme A3 and copper B (CU(B)). The BNC reduces molecular oxygen to 2 water molecules using 4 electrons from cytochrome c in the IMS and 4 protons from the mitochondrial matrix. The polypeptide is Cytochrome c oxidase subunit 5A, mitochondrial (COX5A) (Saguinus labiatus (Red-chested mustached tamarin)).